We begin with the raw amino-acid sequence, 191 residues long: Thymidylate kinase (191 aa).

7–14 (GIDTAGKS) serves as a coordination point for ATP.

This sequence belongs to the thymidylate kinase family.

The enzyme catalyses dTMP + ATP = dTDP + ADP. Its function is as follows. Phosphorylation of dTMP to form dTDP in both de novo and salvage pathways of dTTP synthesis. This is Thymidylate kinase from Sulfurimonas denitrificans (strain ATCC 33889 / DSM 1251) (Thiomicrospira denitrificans (strain ATCC 33889 / DSM 1251)).